A 139-amino-acid chain; its full sequence is Large ribosomal subunit protein uL22c (139 aa).

The protein belongs to the universal ribosomal protein uL22 family. As to quaternary structure, part of the 50S ribosomal subunit.

The protein localises to the plastid. The protein resides in the chloroplast. In terms of biological role, this protein binds specifically to 23S rRNA. Functionally, the globular domain of the protein is located near the polypeptide exit tunnel on the outside of the subunit, while an extended beta-hairpin is found that lines the wall of the exit tunnel in the center of the 70S ribosome. This Cycas taitungensis (Prince sago) protein is Large ribosomal subunit protein uL22c (rpl22).